Consider the following 320-residue polypeptide: ATP-dependent 6-phosphofructokinase (320 aa).

Gly12 provides a ligand contact to ATP. Residue 22–26 (RGVVR) participates in ADP binding. ATP is bound by residues 73–74 (RF) and 103–106 (GDGS). Asp104 provides a ligand contact to Mg(2+). Residue 126 to 128 (TID) participates in substrate binding. Asp128 acts as the Proton acceptor in catalysis. Arg155 lines the ADP pocket. Substrate-binding positions include Arg163 and 170-172 (MGR). Residues 186-188 (GCE), Lys212, and 214-216 (KKH) each bind ADP. Residues Glu223, Arg244, and 250-253 (HIQR) contribute to the substrate site.

The protein belongs to the phosphofructokinase type A (PFKA) family. ATP-dependent PFK group I subfamily. Prokaryotic clade 'B1' sub-subfamily. As to quaternary structure, homotetramer. Requires Mg(2+) as cofactor.

Its subcellular location is the cytoplasm. The enzyme catalyses beta-D-fructose 6-phosphate + ATP = beta-D-fructose 1,6-bisphosphate + ADP + H(+). It functions in the pathway carbohydrate degradation; glycolysis; D-glyceraldehyde 3-phosphate and glycerone phosphate from D-glucose: step 3/4. With respect to regulation, allosterically activated by ADP and other diphosphonucleosides, and allosterically inhibited by phosphoenolpyruvate. Functionally, catalyzes the phosphorylation of D-fructose 6-phosphate to fructose 1,6-bisphosphate by ATP, the first committing step of glycolysis. This is ATP-dependent 6-phosphofructokinase from Vibrio parahaemolyticus serotype O3:K6 (strain RIMD 2210633).